A 458-amino-acid chain; its full sequence is Glutamyl-tRNA reductase (458 aa).

Residues 49-52 (TCNR), serine 111, 116-118 (ETE), and glutamine 122 contribute to the substrate site. Catalysis depends on cysteine 50, which acts as the Nucleophile. 191 to 196 (GAGKMS) provides a ligand contact to NADP(+). Composition is skewed to basic and acidic residues over residues 426-440 (IPKD…KEVE) and 448-458 (ERGHHESDFHN). Residues 426–458 (IPKDGEEHSSSKEVESVTQSSTERGHHESDFHN) are disordered.

It belongs to the glutamyl-tRNA reductase family. Homodimer.

It catalyses the reaction (S)-4-amino-5-oxopentanoate + tRNA(Glu) + NADP(+) = L-glutamyl-tRNA(Glu) + NADPH + H(+). It participates in porphyrin-containing compound metabolism; protoporphyrin-IX biosynthesis; 5-aminolevulinate from L-glutamyl-tRNA(Glu): step 1/2. Catalyzes the NADPH-dependent reduction of glutamyl-tRNA(Glu) to glutamate 1-semialdehyde (GSA). The polypeptide is Glutamyl-tRNA reductase (Natranaerobius thermophilus (strain ATCC BAA-1301 / DSM 18059 / JW/NM-WN-LF)).